The primary structure comprises 102 residues: Small ribosomal subunit protein uS10 (102 aa).

The protein belongs to the universal ribosomal protein uS10 family. As to quaternary structure, part of the 30S ribosomal subunit.

Involved in the binding of tRNA to the ribosomes. This Cereibacter sphaeroides (strain ATCC 17029 / ATH 2.4.9) (Rhodobacter sphaeroides) protein is Small ribosomal subunit protein uS10.